Reading from the N-terminus, the 33-residue chain is Photosystem II reaction center protein Psb30 (33 aa).

The helical transmembrane segment at 5–25 (LITQLASLILIVASGPIVIGL) threads the bilayer.

It belongs to the Psb30/Ycf12 family. In terms of assembly, PSII is composed of 1 copy each of membrane proteins PsbA, PsbB, PsbC, PsbD, PsbE, PsbF, PsbH, PsbI, PsbJ, PsbK, PsbL, PsbM, PsbT, PsbX, PsbY, PsbZ, Psb30/Ycf12, peripheral proteins of the oxygen-evolving complex and a large number of cofactors. It forms dimeric complexes.

The protein localises to the plastid. Its subcellular location is the chloroplast thylakoid membrane. A core subunit of photosystem II (PSII), probably helps stabilize the reaction center. The polypeptide is Photosystem II reaction center protein Psb30 (Lepocinclis buetschlii).